The chain runs to 401 residues: Sulfate adenylyltransferase (401 aa).

This sequence belongs to the sulfate adenylyltransferase family.

The enzyme catalyses sulfate + ATP + H(+) = adenosine 5'-phosphosulfate + diphosphate. The protein operates within sulfur metabolism; hydrogen sulfide biosynthesis; sulfite from sulfate: step 1/3. This Alcanivorax borkumensis (strain ATCC 700651 / DSM 11573 / NCIMB 13689 / SK2) protein is Sulfate adenylyltransferase.